The primary structure comprises 197 residues: Surfactant protein C (197 aa).

A propeptide spanning residues 1–23 (MDVGSKEVLMESPPDYSAAPRGR) is cleaved from the precursor. Residues Cys-28 and Cys-29 are each lipidated (S-palmitoyl cysteine). The propeptide occupies 59–197 (HMSQKHTEMV…LCGEVPLYYI (139 aa)). The BRICHOS domain maps to 94–197 (FSIGSTGLVV…LCGEVPLYYI (104 aa)). Cystine bridges form between Cys-120–Cys-148 and Cys-121–Cys-189.

The protein resides in the secreted. It is found in the extracellular space. The protein localises to the surface film. Its function is as follows. Pulmonary surfactant associated proteins promote alveolar stability by lowering the surface tension at the air-liquid interface in the peripheral air spaces. The polypeptide is Surfactant protein C (Homo sapiens (Human)).